The chain runs to 365 residues: uncharacterized protein (365 aa).

The next 6 membrane-spanning stretches (helical) occupy residues 3–23 (MDTS…LYSI), 60–80 (IGII…LNII), 100–120 (VFLF…LIAI), 141–161 (SGIL…GDEF), 171–191 (AIAS…IPLL), and 280–300 (TALF…LALF).

To S.solfataricus C04034.

Its subcellular location is the cell membrane. This is an uncharacterized protein from Methanocaldococcus jannaschii (strain ATCC 43067 / DSM 2661 / JAL-1 / JCM 10045 / NBRC 100440) (Methanococcus jannaschii).